The primary structure comprises 396 residues: Glutamyl-tRNA reductase (396 aa).

Residues 45-48 (TCNR), Ser101, 106-108 (EDQ), and Gln112 contribute to the substrate site. The Nucleophile role is filled by Cys46. An NADP(+)-binding site is contributed by 177 to 182 (GFGDVG).

The protein belongs to the glutamyl-tRNA reductase family. Homodimer.

The catalysed reaction is (S)-4-amino-5-oxopentanoate + tRNA(Glu) + NADP(+) = L-glutamyl-tRNA(Glu) + NADPH + H(+). Its pathway is porphyrin-containing compound metabolism; protoporphyrin-IX biosynthesis; 5-aminolevulinate from L-glutamyl-tRNA(Glu): step 1/2. Functionally, catalyzes the NADPH-dependent reduction of glutamyl-tRNA(Glu) to glutamate 1-semialdehyde (GSA). The sequence is that of Glutamyl-tRNA reductase from Clostridium acetobutylicum (strain ATCC 824 / DSM 792 / JCM 1419 / IAM 19013 / LMG 5710 / NBRC 13948 / NRRL B-527 / VKM B-1787 / 2291 / W).